Here is a 217-residue protein sequence, read N- to C-terminus: RNA chaperone ProQ (217 aa).

The interval Glu105 to Ser166 is disordered. Positions Lys121–Pro131 are enriched in basic residues. Positions Arg132–His162 are enriched in basic and acidic residues.

Belongs to the ProQ family.

Its subcellular location is the cytoplasm. In terms of biological role, RNA chaperone with significant RNA binding, RNA strand exchange and RNA duplexing activities. May regulate ProP activity through an RNA-based, post-transcriptional mechanism. This chain is RNA chaperone ProQ, found in Escherichia coli O8 (strain IAI1).